The chain runs to 152 residues: Photosystem II extrinsic protein U, chloroplastic (152 aa).

The N-terminal 35 residues, 1–35, are a transit peptide targeting the chloroplast; that stretch reads MDSTAFVGAAAPLRVAAAARSTICMAAADDKPVVS. The transit peptide at 36-59 directs the protein to the thylakoid; the sequence is RRAALTGAAAAALAAVAGSLPALA.

The protein belongs to the PsbU family. As to quaternary structure, PSII is composed of 1 copy each of membrane proteins PsbA, PsbB, PsbC, PsbD, PsbE, PsbF, PsbH, PsbI, PsbJ, PsbK, PsbL, PsbM, PsbT, PsbX, PsbY, PsbZ, Psb30/Ycf12, at least 3 peripheral proteins of the oxygen-evolving complex and a large number of cofactors. It forms dimeric complexes. The oxygen-evolving complex in red algae is composed of PsbO (OEC33), PsbQ', cytochrome c-550 and PsbU. Predicted to be translocated into the thylakoid lumen by the Tat system.

It localises to the plastid. The protein localises to the chloroplast thylakoid membrane. Functionally, one of the extrinsic, lumenal subunits of photosystem II (PSII). PSII is a light-driven water plastoquinone oxidoreductase, using light energy to abstract electrons from H(2)O, generating a proton gradient subsequently used for ATP formation. The extrinsic proteins stabilize the structure of photosystem II oxygen-evolving complex (OEC), the ion environment of oxygen evolution and protect the OEC against heat-induced inactivation. The polypeptide is Photosystem II extrinsic protein U, chloroplastic (Pyropia yezoensis (Susabi-nori)).